Consider the following 152-residue polypeptide: Calcium-binding protein SPEC 1A (152 aa).

EF-hand domains lie at 10-45, 46-81, 84-119, and 120-152; these read EEVT…TGKS, YTDK…QMVK, WKEE…SKPP, and MKRK…IKSC. Positions 23, 25, 27, 29, 34, 59, 61, 63, 65, 70, 97, 99, 101, 103, 108, 133, 135, 137, 139, and 144 each coordinate Ca(2+). Residues 95–121 form a disordered region; sequence DMDKDGNGSLSPQELREALSASKPPMK.

In terms of tissue distribution, found in cell lineages giving rise to the aboral ectoderm, a squamous epithelium covering the surface of the late stage embryo and larva.

Its function is as follows. Calcium-binding protein involved in larval development and metamorphosis. Likely to function as calcium buffers mediating the transport of calcium from the sea water to the blastocoel where calcium is required for skeleton formation. This chain is Calcium-binding protein SPEC 1A (SPEC1), found in Strongylocentrotus purpuratus (Purple sea urchin).